Consider the following 207-residue polypeptide: Outer-membrane lipoprotein LolB (207 aa).

The first 21 residues, 1 to 21, serve as a signal peptide directing secretion; that stretch reads MPLPDFRLIRLLPLAALVLTA. A lipid anchor (N-palmitoyl cysteine) is attached at cysteine 22. Cysteine 22 is lipidated: S-diacylglycerol cysteine.

This sequence belongs to the LolB family. Monomer.

The protein localises to the cell outer membrane. Its function is as follows. Plays a critical role in the incorporation of lipoproteins in the outer membrane after they are released by the LolA protein. This chain is Outer-membrane lipoprotein LolB, found in Escherichia coli (strain SMS-3-5 / SECEC).